The following is a 621-amino-acid chain: Nitrate reductase [NADH] 1 (621 aa).

Residues 249–324 form the Cytochrome b5 heme-binding domain; that stretch reads GKEFTMSEVR…LDTYRIGELI (76 aa). The heme site is built by histidine 284 and histidine 307. Positions 361–473 constitute an FAD-binding FR-type domain; that stretch reads REKIHCRLVG…KGPLGHVEYT (113 aa). Residues 413–416, 430–432, phenylalanine 435, 447–449, serine 497, and threonine 500 contribute to the FAD site; these read RAYT, LVK, and LMT.

Belongs to the nitrate reductase family. In terms of assembly, homodimer. FAD is required as a cofactor. Heme serves as cofactor. Requires Mo-molybdopterin as cofactor.

It catalyses the reaction nitrite + NAD(+) + H2O = nitrate + NADH + H(+). In terms of biological role, nitrate reductase is a key enzyme involved in the first step of nitrate assimilation in plants, fungi and bacteria. This is Nitrate reductase [NADH] 1 from Zea mays (Maize).